A 95-amino-acid chain; its full sequence is Aspartyl/glutamyl-tRNA(Asn/Gln) amidotransferase subunit C (95 aa).

Belongs to the GatC family. As to quaternary structure, heterotrimer of A, B and C subunits.

It catalyses the reaction L-glutamyl-tRNA(Gln) + L-glutamine + ATP + H2O = L-glutaminyl-tRNA(Gln) + L-glutamate + ADP + phosphate + H(+). The enzyme catalyses L-aspartyl-tRNA(Asn) + L-glutamine + ATP + H2O = L-asparaginyl-tRNA(Asn) + L-glutamate + ADP + phosphate + 2 H(+). Functionally, allows the formation of correctly charged Asn-tRNA(Asn) or Gln-tRNA(Gln) through the transamidation of misacylated Asp-tRNA(Asn) or Glu-tRNA(Gln) in organisms which lack either or both of asparaginyl-tRNA or glutaminyl-tRNA synthetases. The reaction takes place in the presence of glutamine and ATP through an activated phospho-Asp-tRNA(Asn) or phospho-Glu-tRNA(Gln). The chain is Aspartyl/glutamyl-tRNA(Asn/Gln) amidotransferase subunit C from Nitrobacter hamburgensis (strain DSM 10229 / NCIMB 13809 / X14).